The chain runs to 372 residues: Alanine dehydrogenase 2 (372 aa).

Residue histidine 95 is part of the active site. 169–199 (KVTIIGGGQAGTNAAKIALGLGADVTILDVN) serves as a coordination point for NAD(+).

It belongs to the AlaDH/PNT family.

It catalyses the reaction L-alanine + NAD(+) + H2O = pyruvate + NH4(+) + NADH + H(+). It functions in the pathway amino-acid degradation; L-alanine degradation via dehydrogenase pathway; NH(3) and pyruvate from L-alanine: step 1/1. Its function is as follows. May play a role in cell wall synthesis as L-alanine is an important constituent of the peptidoglycan layer. The polypeptide is Alanine dehydrogenase 2 (ald2) (Staphylococcus aureus (strain Mu50 / ATCC 700699)).